A 149-amino-acid polypeptide reads, in one-letter code: Pleckstrin homology domain-containing family J member 1 (149 aa).

Residues 15–108 (PAEKAAEILM…WIEALKRASY (94 aa)) form the PH domain.

The protein is Pleckstrin homology domain-containing family J member 1 (PLEKHJ1) of Gallus gallus (Chicken).